The primary structure comprises 384 residues: Neuropeptide Y receptor type 1 (384 aa).

The Extracellular portion of the chain corresponds to 1–44; that stretch reads MNSTLFSQVENHSVHSNFSEKNAQLLAFENDDCHLPLAMIFTLA. N-linked (GlcNAc...) asparagine glycosylation is found at asparagine 2, asparagine 11, and asparagine 17. A helical membrane pass occupies residues 45–65; the sequence is LAYGAVIILGVSGNLALIIII. The Cytoplasmic segment spans residues 66–76; that stretch reads LKQKEMRNVTN. A helical membrane pass occupies residues 77–97; sequence ILIVNLSFSDLLVAIMCLPFT. The Extracellular segment spans residues 98 to 116; the sequence is FVYTLMDHWVFGEAMCKLN. Cysteine 113 and cysteine 198 form a disulfide bridge. The chain crosses the membrane as a helical span at residues 117–137; that stretch reads PFVQCVSITVSIFSLVLIAVE. At 138–154 the chain is on the cytoplasmic side; that stretch reads RHQLIINPRGWRPNNRH. A helical transmembrane segment spans residues 155-175; the sequence is AYVGIAVIWVLAVASSLPFLI. The Extracellular portion of the chain corresponds to 176 to 211; the sequence is YQVMTDEPFQNVTLDAYKDKYVCFDQFPSDSHRLSY. The helical transmembrane segment at 212 to 232 threads the bilayer; that stretch reads TTLLLVLQYFGPLCFIFICYF. The Cytoplasmic segment spans residues 233–260; sequence KIYIRLKRRNNMMDKMRDNKYRSSETKR. Residues 261-281 traverse the membrane as a helical segment; it reads INIMLLSIVVAFAVCWLPLTI. The Extracellular portion of the chain corresponds to 282–299; that stretch reads FNTVFDWNHQIIATCNHN. Residues 300-320 traverse the membrane as a helical segment; that stretch reads LLFLLCHLTAMISTCVNPIFY. Topologically, residues 321 to 384 are cytoplasmic; the sequence is GFLNKNFQRD…INNNDDNEKI (64 aa). Residue cysteine 338 is the site of S-palmitoyl cysteine attachment. Serine 368 bears the Phosphoserine mark.

It belongs to the G-protein coupled receptor 1 family.

The protein localises to the cell membrane. Functionally, receptor for neuropeptide Y and peptide YY. The rank order of affinity of this receptor for pancreatic polypeptides is NPY &gt; [Pro-34] PYY, PYY and [Leu-31, Pro-34] NPY &gt; NPY (2-36) &gt; [Ile-31, Gln-34] PP and PYY (3-36) &gt; PP &gt; NPY free acid. The protein is Neuropeptide Y receptor type 1 (NPY1R) of Homo sapiens (Human).